The sequence spans 158 residues: Endoribonuclease YbeY (158 aa).

Zn(2+) contacts are provided by His-114, His-118, and His-124.

The protein belongs to the endoribonuclease YbeY family. Zn(2+) is required as a cofactor.

The protein localises to the cytoplasm. Its function is as follows. Single strand-specific metallo-endoribonuclease involved in late-stage 70S ribosome quality control and in maturation of the 3' terminus of the 16S rRNA. In Legionella pneumophila (strain Paris), this protein is Endoribonuclease YbeY.